We begin with the raw amino-acid sequence, 953 residues long: Serine/threonine-protein kinase ppk30 (953 aa).

Positions 57–326 (VIIQRYLSEG…IYQTLKEIME (270 aa)) constitute a Protein kinase domain. Residues 63–71 (LSEGGFSHV) and lysine 85 contribute to the ATP site. The Proton acceptor role is filled by aspartate 187. Disordered regions lie at residues 343 to 402 (ASTY…PSVS), 427 to 451 (SPIP…RRAD), 538 to 606 (RFLP…NRMN), 641 to 669 (RKEP…NKDV), 748 to 791 (STSQ…RPIG), and 864 to 953 (RKSC…ESLE). Polar residues-rich tracts occupy residues 355–369 (RTPS…SRPA), 378–402 (TVQT…PSVS), and 433–444 (KSYSATIQTPRS). Over residues 547-557 (PSEFSSSVGSK) the composition is skewed to low complexity. Over residues 558 to 575 (QNLSMDIPSVQNVSTKQK) the composition is skewed to polar residues. A compositionally biased stretch (basic and acidic residues) spans 656–669 (LKKDQSSEVANKDV). Polar residues predominate over residues 748 to 766 (STSQVSHTQRLQQSISTSL). Basic and acidic residues-rich tracts occupy residues 767 to 778 (ERVKSNTKKESN), 865 to 884 (KSCE…DLER), and 937 to 953 (PHIE…ESLE). Phosphoserine is present on residues serine 872 and serine 875.

Belongs to the protein kinase superfamily. Ser/Thr protein kinase family.

It localises to the cytoplasm. The enzyme catalyses L-seryl-[protein] + ATP = O-phospho-L-seryl-[protein] + ADP + H(+). The catalysed reaction is L-threonyl-[protein] + ATP = O-phospho-L-threonyl-[protein] + ADP + H(+). This chain is Serine/threonine-protein kinase ppk30 (ppk30), found in Schizosaccharomyces pombe (strain 972 / ATCC 24843) (Fission yeast).